The sequence spans 83 residues: Gas vesicle protein G (83 aa).

Belongs to the gas vesicle GvpG family. In terms of assembly, gvpF to GvpM interact with each other in vitro, and may form multi-subunit complex(es).

The protein localises to the gas vesicle. In terms of biological role, proteins GvpF to GvpM might be involved in nucleating gas vesicle formation. A minor component of the gas vesicle. Gas vesicles are hollow, gas filled proteinaceous nanostructures found in some microorganisms. They allow positioning of halobacteria at the optimal depth for growth in the poorly aerated, shallow brine pools of their habitat. Expression of a 9.5 kb mc-vac DNA fragment containing 2 divergently transcribed regions (gvpD-gvpE-gvpF-gvpG-gvpH-gvpI-gvpJ-gvpK-gvpL-gvpM and gvpA-gvpC-gvpN-gvpO) allows H.volcanii to produce gas vesicles. The sequence is that of Gas vesicle protein G from Haloferax mediterranei (strain ATCC 33500 / DSM 1411 / JCM 8866 / NBRC 14739 / NCIMB 2177 / R-4) (Halobacterium mediterranei).